We begin with the raw amino-acid sequence, 183 residues long: Oligoribonuclease (183 aa).

The 164-residue stretch at 9-172 (LIWIDLEMTG…DDIRESIEEL (164 aa)) folds into the Exonuclease domain. The active site involves Tyr130.

This sequence belongs to the oligoribonuclease family.

It is found in the cytoplasm. Functionally, 3'-to-5' exoribonuclease specific for small oligoribonucleotides. The sequence is that of Oligoribonuclease from Haemophilus ducreyi (strain 35000HP / ATCC 700724).